A 634-amino-acid chain; its full sequence is Protein IcfG (634 aa).

Residues 306–361 form the HAMP domain; the sequence is HHSTVPILDLTKASQAIAAGDLDYEININQGNRQDEIGILGNSFIYMKNQIKTLIA. Residues 385–633 form the PPM-type phosphatase domain; the sequence is PISLPDLQQW…DDITMIAVYR (249 aa).

Functionally, involved in cross-regulation of inorganic carbon and glucose metabolisms. This chain is Protein IcfG (icfG), found in Synechocystis sp. (strain ATCC 27184 / PCC 6803 / Kazusa).